A 548-amino-acid polypeptide reads, in one-letter code: Probable malate:quinone oxidoreductase (548 aa).

Belongs to the MQO family. Requires FAD as cofactor.

It catalyses the reaction (S)-malate + a quinone = a quinol + oxaloacetate. The protein operates within carbohydrate metabolism; tricarboxylic acid cycle; oxaloacetate from (S)-malate (quinone route): step 1/1. This is Probable malate:quinone oxidoreductase from Escherichia coli O6:H1 (strain CFT073 / ATCC 700928 / UPEC).